We begin with the raw amino-acid sequence, 132 residues long: Large-conductance mechanosensitive channel (132 aa).

Helical transmembrane passes span 11-31 and 75-95; these read FISRGNALDLAVGVVIGGAFG and GSFLQAVFDFVIIAFAIFLLV.

It belongs to the MscL family. As to quaternary structure, homopentamer.

It localises to the cell inner membrane. In terms of biological role, channel that opens in response to stretch forces in the membrane lipid bilayer. May participate in the regulation of osmotic pressure changes within the cell. This is Large-conductance mechanosensitive channel from Synechococcus sp. (strain JA-2-3B'a(2-13)) (Cyanobacteria bacterium Yellowstone B-Prime).